The chain runs to 629 residues: Pentatricopeptide repeat-containing protein At1g63150 (629 aa).

16 PPR repeats span residues 46 to 81, 82 to 116, 117 to 151, 152 to 186, 187 to 221, 222 to 256, 257 to 291, 292 to 326, 327 to 361, 362 to 396, 397 to 431, 432 to 466, 467 to 501, 502 to 532, 534 to 568, and 569 to 603; these read ASGDYREILRNRLSDIIKVDDAVDLFGDMVKSRPFP, SIVEFNKLLSAVAKMNKFELVISLGEQMQTLGISH, DLYTYSIFINCFCRRSQLSLALAVLAKMMKLGYEP, DIVTLSSLLNGYCHSKRISDAVALVDQMVEMGYKP, DTFTFTTLIHGLFLHNKASEAVALVDQMVQRGCQP, DLVTYGTVVNGLCKRGDIDLALNLLNKMEAARIKA, NVVIFNTIIDSLCKYRHVEVAVDLFTEMETKGIRP, NVVTYNSLINCLCNYGRWSDASRLLSNMLEKKINP, NVVTFNALIDAFFKEGKLVEAEKLHEEMIQRSIDP, DTITYNLLINGFCMHNRLDEAKQMFKFMVSKDCLP, NIQTYNTLINGFCKCKRVEDGVELFREMSQRGLVG, NTVTYTTIIQGFFQAGDCDSAQMVFKQMVSNRVPT, DIMTYSILLHGLCSYGKLDTALVIFKYLQKSEMEL, NIFIYNTMIEGMCKAGKVGEAWDLFCSLSIK, DVVTYNTMISGLCSKRLLQEADDLFRKMKEDGTLP, and NSGTYNTLIRANLRDCDRAASAELIKEMRSSGFVG.

It belongs to the PPR family. P subfamily.

This Arabidopsis thaliana (Mouse-ear cress) protein is Pentatricopeptide repeat-containing protein At1g63150.